Consider the following 913-residue polypeptide: Valine--tRNA ligase (913 aa).

The 'HIGH' region motif lies at 49–59 (PNVTGNLHLGH). The 'KMSKS' region signature appears at 544 to 548 (KMSKS). Lysine 547 serves as a coordination point for ATP. Residues 851–912 (DWVKKQQKRL…ERLEGVLAQL (62 aa)) adopt a coiled-coil conformation.

This sequence belongs to the class-I aminoacyl-tRNA synthetase family. ValS type 1 subfamily. As to quaternary structure, monomer.

It is found in the cytoplasm. The catalysed reaction is tRNA(Val) + L-valine + ATP = L-valyl-tRNA(Val) + AMP + diphosphate. Functionally, catalyzes the attachment of valine to tRNA(Val). As ValRS can inadvertently accommodate and process structurally similar amino acids such as threonine, to avoid such errors, it has a 'posttransfer' editing activity that hydrolyzes mischarged Thr-tRNA(Val) in a tRNA-dependent manner. This is Valine--tRNA ligase from Deinococcus radiodurans (strain ATCC 13939 / DSM 20539 / JCM 16871 / CCUG 27074 / LMG 4051 / NBRC 15346 / NCIMB 9279 / VKM B-1422 / R1).